A 246-amino-acid polypeptide reads, in one-letter code: UPF0246 protein str1967 (246 aa).

This sequence belongs to the UPF0246 family.

This is UPF0246 protein str1967 from Streptococcus thermophilus (strain CNRZ 1066).